We begin with the raw amino-acid sequence, 2531 residues long: Talin (2531 aa).

The FERM domain occupies 87–401 (RPLRVRMMDE…GYIDIILKKK (315 aa)). An interaction with VIN1 region spans residues 598–621 (GEKLLEAARGLAGAVRHLLKSAEP). The I/LWEQ domain occupies 2287-2526 (TDWVDPSDPN…KIRHDKYKRH (240 aa)). The disordered stretch occupies residues 2466–2485 (AAKRSSEEGDDEEVSGGGQE).

In terms of assembly, interacts with VIN1 (vinculin); the interaction facilitates VIN1 binding to F-actin.

The protein localises to the cytoplasm. Its subcellular location is the cytoskeleton. It localises to the cell cortex. Functionally, probably involved in connections of major cytoskeletal structures to the plasma membrane. This is Talin from Oscarella pearsei (Sponge).